The sequence spans 280 residues: 4-deoxy-L-threo-5-hexosulose-uronate ketol-isomerase (280 aa).

Zn(2+) is bound by residues His-198, His-200, Glu-205, and His-247.

It belongs to the KduI family. It depends on Zn(2+) as a cofactor.

It catalyses the reaction 5-dehydro-4-deoxy-D-glucuronate = 3-deoxy-D-glycero-2,5-hexodiulosonate. The protein operates within glycan metabolism; pectin degradation; 2-dehydro-3-deoxy-D-gluconate from pectin: step 4/5. Its function is as follows. Catalyzes the isomerization of 5-dehydro-4-deoxy-D-glucuronate to 3-deoxy-D-glycero-2,5-hexodiulosonate. This Bacteroides fragilis (strain YCH46) protein is 4-deoxy-L-threo-5-hexosulose-uronate ketol-isomerase.